A 402-amino-acid polypeptide reads, in one-letter code: Heat stress transcription factor A-6a (402 aa).

Positions 1–28 (MLKPQTPRARRAAHPNSHMASSSSSSSL) are disordered. Positions 212-258 (EVVSLKRDRAALRAEVIMLKQQYNACKSQLIAMEEMVRNIERRQQQT) form a coiled coil. Positions 216–266 (LKRDRAALRAEVIMLKQQYNACKSQLIAMEEMVRNIERRQQQTIGFFAKVL) are hydrophobic repeat HR-A/B. Positions 290 to 293 (KRQR) match the Nuclear localization signal motif. The AHA signature appears at 349 to 358 (DDVWEELDAL).

This sequence belongs to the HSF family. Class A subfamily. Homotrimer. Post-translationally, exhibits temperature-dependent phosphorylation.

It is found in the nucleus. Functionally, transcriptional regulator that specifically binds DNA of heat shock promoter elements (HSE). The chain is Heat stress transcription factor A-6a (HSFA6B) from Oryza sativa subsp. japonica (Rice).